The following is a 201-amino-acid chain: Cell division protein SepF (201 aa).

Over residues 27–38 the composition is skewed to basic and acidic residues; sequence VQERTSVQRDSR. Residues 27-99 are disordered; sequence VQERTSVQRD…PRVQNKDSVR (73 aa). Residues 43–54 show a composition bias toward polar residues; the sequence is QEASQRSHMTNS. The segment covering 72 to 81 has biased composition (basic and acidic residues); it reads NRQERQRVQR. Polar residues predominate over residues 83 to 92; sequence NAYQQATPRV.

It belongs to the SepF family. In terms of assembly, homodimer. Interacts with FtsZ.

It is found in the cytoplasm. In terms of biological role, cell division protein that is part of the divisome complex and is recruited early to the Z-ring. Probably stimulates Z-ring formation, perhaps through the cross-linking of FtsZ protofilaments. Its function overlaps with FtsA. This chain is Cell division protein SepF, found in Streptococcus agalactiae serotype V (strain ATCC BAA-611 / 2603 V/R).